The primary structure comprises 157 residues: Protein UXT (157 aa).

The protein belongs to the UXT family. In terms of assembly, homohexamer. Component of the PAQosome complex which is responsible for the biogenesis of several protein complexes and which consists of R2TP complex members RUVBL1, RUVBL2, RPAP3 and PIH1D1, URI complex members PFDN2, PFDN6, PDRG1, UXT and URI1 as well as ASDURF, POLR2E and DNAAF10/WDR92. Interacts with LRPPRC. Interacts with androgen receptor AR (via N-terminus). Interacts with estrogen receptor ESR1; the interaction relocalizes ESR1 from the nucleus to the cytoplasm. In the nucleus, interacts specifically with RELA (via RHD domain) and forms a dynamic complex with NF-kappa-B and is recruited to the NF-kappa-B enhanceosome upon stimulation. Interacts with MECOM. Interacts with URI1. As to quaternary structure, part of complex I composed of TNF-alpha receptor TNFRSF1A, TRADD, TRAF2 and RIPK1 formed in response to TNF-alpha stimulation. Within the complex, interacts (via TPQE motif) with TRAF2; the interaction prevents the recruitment of FADD and CASP8/caspase 8 to complex I. In terms of processing, ubiquitinated by E3 ubiquitin-protein ligase complex containing FBXO7; leading to proteasomal degradation. As to expression, ubiquitous. Expressed in prostate epithelial cells. Expressed in mammary epithelial cells. Highest levels in the heart, skeletal muscle, pancreas, kidney, liver, adrenal gland, peripheral blood leukocytes, lymph node, prostate, and thyroid and the lowest levels in bladder and uterus. Overexpressed in a number of tumor tissues.

Its subcellular location is the cytoplasm. It localises to the nucleus. The protein resides in the cytoskeleton. It is found in the microtubule organizing center. The protein localises to the centrosome. Its subcellular location is the spindle pole. Involved in gene transcription regulation. Acts in concert with the corepressor URI1 to regulate androgen receptor AR-mediated transcription. Together with URI1, associates with chromatin to the NKX3-1 promoter region. Negatively regulates the transcriptional activity of the estrogen receptor ESR1 by inducing its translocation into the cytoplasm. May act as nuclear chaperone that facilitates the formation of the NF-kappa-B enhanceosome and thus positively regulates NF-kappa-B transcription activity. Potential component of mitochondrial-associated LRPPRC, a multidomain organizer that potentially integrates mitochondria and the microtubular cytoskeleton with chromosome remodeling. Increasing concentrations of UXT contributes to progressive aggregation of mitochondria and cell death potentially through its association with LRPPRC. Suppresses cell transformation and it might mediate this function by interaction and inhibition of the biological activity of cell proliferation and survival stimulatory factors like MECOM. Functionally, plays a role in protecting cells against TNF-alpha-induced apoptosis by preventing the recruitment of FADD and caspase 8 to the apoptotic complex I, composed of TRADD, TRAF2 and RIPK1/RIP. The chain is Protein UXT (UXT) from Homo sapiens (Human).